Here is a 385-residue protein sequence, read N- to C-terminus: Probable endopeptidase MT2245 (385 aa).

Positions 235-257 are enriched in pro residues; it reads AALPPGAPPGDGPAPGVAPPPGG. The segment at 235-268 is disordered; sequence AALPPGAPPGDGPAPGVAPPPGGMPGLPFVQPDG. Residues 270-385 form the NlpC/P60 domain; the sequence is GGDRTAVVQA…SGPIYDARRY (116 aa). Residue cysteine 300 is the Nucleophile of the active site. The Proton acceptor role is filled by histidine 348. The active site involves histidine 360.

Belongs to the peptidase C40 family.

The sequence is that of Probable endopeptidase MT2245 from Mycobacterium tuberculosis (strain CDC 1551 / Oshkosh).